Consider the following 287-residue polypeptide: Oxaloacetate decarboxylase (287 aa).

A substrate-binding site is contributed by Ser50. Asp88 serves as a coordination point for Mg(2+). Substrate-binding residues include Arg159 and His235.

The protein belongs to the isocitrate lyase/PEP mutase superfamily. Oxaloacetate decarboxylase family. As to quaternary structure, homotetramer; dimer of dimers. It depends on Mg(2+) as a cofactor.

The enzyme catalyses oxaloacetate + H(+) = pyruvate + CO2. Functionally, catalyzes the decarboxylation of oxaloacetate into pyruvate. Seems to play a role in maintaining cellular concentrations of bicarbonate and pyruvate. This Marinomonas sp. (strain MWYL1) protein is Oxaloacetate decarboxylase.